The primary structure comprises 63 residues: Large ribosomal subunit protein bL28 (63 aa).

Residues 11–20 (GNNSGASVSH) are compositionally biased toward polar residues. The interval 11 to 30 (GNNSGASVSHSNKKTKRKWK) is disordered. Residues 21–30 (SNKKTKRKWK) are compositionally biased toward basic residues.

Belongs to the bacterial ribosomal protein bL28 family.

The sequence is that of Large ribosomal subunit protein bL28 from Natranaerobius thermophilus (strain ATCC BAA-1301 / DSM 18059 / JW/NM-WN-LF).